The chain runs to 77 residues: U14-theraphotoxin-Cg1b (77 aa).

The N-terminal stretch at 1-21 (MKTSVLLVILGIAAITVQCTA) is a signal peptide. Residues 22 to 49 (SESVEQDSLRTFVDAVLGWNAEMASEAR) constitute a propeptide that is removed on maturation. Disulfide bonds link Cys50–Cys64, Cys57–Cys69, and Cys63–Cys75.

The protein belongs to the neurotoxin 10 (Hwtx-1) family. 65 (Jztx-21) subfamily. As to expression, expressed by the venom gland.

Its subcellular location is the secreted. Its function is as follows. Probable ion channel inhibitor. This Chilobrachys guangxiensis (Chinese earth tiger tarantula) protein is U14-theraphotoxin-Cg1b.